Here is a 252-residue protein sequence, read N- to C-terminus: Lipoprotein PrgK (252 aa).

Positions 1 to 17 (MIRRYLYTFLLVMTLAG) are cleaved as a signal peptide. Cys18 carries N-palmitoyl cysteine lipidation. A lipid anchor (S-diacylglycerol cysteine) is attached at Cys18. Residues 207–227 (FATSWIVLIILLSVMSAGFGV) traverse the membrane as a helical segment.

This sequence belongs to the YscJ lipoprotein family.

The protein localises to the cell outer membrane. Functionally, required for invasion of epithelial cells. Could be involved in protein secretion. This Salmonella typhimurium (strain LT2 / SGSC1412 / ATCC 700720) protein is Lipoprotein PrgK (prgK).